A 373-amino-acid polypeptide reads, in one-letter code: Putative ribosome biogenesis protein C8F11.04 (373 aa).

Positions 265-373 are disordered; that stretch reads RKVVTKETAS…VKAGKNKVKH (109 aa). Residues 292-320 are compositionally biased toward basic and acidic residues; sequence KVEVAKESKDSKQQNVSDKKQVTVKEVPK. Over residues 347–359 the composition is skewed to polar residues; the sequence is KVSQSSLKANGTT. A compositionally biased stretch (basic residues) spans 362-373; the sequence is KKVKAGKNKVKH.

Belongs to the universal ribosomal protein uL1 family. Highly divergent. As to quaternary structure, component of the 90S pre-ribosomes.

The protein resides in the nucleus. It localises to the nucleolus. Functionally, involved in rRNA-processing and ribosome biosynthesis. The protein is Putative ribosome biogenesis protein C8F11.04 of Schizosaccharomyces pombe (strain 972 / ATCC 24843) (Fission yeast).